Consider the following 377-residue polypeptide: Protein RecA (377 aa).

Position 65–72 (65–72 (GPESSGKT)) interacts with ATP. The disordered stretch occupies residues 329–377 (GDEEAAATKATETKTDAPKDKDKGKTKAKDKPADVTPGQIELAPDKSAK). A compositionally biased stretch (basic and acidic residues) spans 339–361 (TETKTDAPKDKDKGKTKAKDKPA).

The protein belongs to the RecA family.

The protein resides in the cytoplasm. Its function is as follows. Can catalyze the hydrolysis of ATP in the presence of single-stranded DNA, the ATP-dependent uptake of single-stranded DNA by duplex DNA, and the ATP-dependent hybridization of homologous single-stranded DNAs. It interacts with LexA causing its activation and leading to its autocatalytic cleavage. This is Protein RecA from Levilactobacillus brevis (strain ATCC 367 / BCRC 12310 / CIP 105137 / JCM 1170 / LMG 11437 / NCIMB 947 / NCTC 947) (Lactobacillus brevis).